We begin with the raw amino-acid sequence, 569 residues long: MRYSRLFGKTQREIPSDAETISHQLLLRSGMIAQLTAGVYSFMPLAWRSIQKIENIIRQEMNKAGCQELAMPVLQPVEIWQQSGREAPFGQTLFHLKDRKDRNLVLGPTHEEVITDLASRYIQSYRDLPQRLYQIQAKFRDEPRPRGGLIRVREFIMKDMYSFDASPEGLDDSYQTMKQAYESVYRRCGLESMVIDADSGAIGGKASHEFMIVAESGEDSIIYCPKCSYAANAEKAVFKKKTLPKETLKDLEEVATPGQKAISDVARFLAVKPENTLKAVFYMADGKFVMAVIRGDLDINEIKLKNLLKCNDLRLAEDGEVKAAGVVAGSASPVGLKNILIVADDSVENGSNFVAGANKDGFHLKNVNCGRDFRADKMADIALAAEGSACPFCDGTFASKRGVEVGHIFKLGTFLSERFGANFTDAEGVSHPIIMGCYGMGVGRLLAAAIEQNHDEKGIIWPMPIAPYQVYICGLFLDNPVVRESAEKIYAELEAKGIEVLFDDRELTAGVKFNDADLLGIPLRLTISPRNLDKGGVEFKLRRNKESELVPLDSIVERVIATIKSESDL.

The protein belongs to the class-II aminoacyl-tRNA synthetase family. ProS type 1 subfamily. Homodimer.

The protein localises to the cytoplasm. It catalyses the reaction tRNA(Pro) + L-proline + ATP = L-prolyl-tRNA(Pro) + AMP + diphosphate. In terms of biological role, catalyzes the attachment of proline to tRNA(Pro) in a two-step reaction: proline is first activated by ATP to form Pro-AMP and then transferred to the acceptor end of tRNA(Pro). As ProRS can inadvertently accommodate and process non-cognate amino acids such as alanine and cysteine, to avoid such errors it has two additional distinct editing activities against alanine. One activity is designated as 'pretransfer' editing and involves the tRNA(Pro)-independent hydrolysis of activated Ala-AMP. The other activity is designated 'posttransfer' editing and involves deacylation of mischarged Ala-tRNA(Pro). The misacylated Cys-tRNA(Pro) is not edited by ProRS. The sequence is that of Proline--tRNA ligase from Dehalococcoides mccartyi (strain CBDB1).